We begin with the raw amino-acid sequence, 500 residues long: Alpha-L-arabinofuranosidase (500 aa).

A signal peptide spans 1 to 21 (MLSNARIIAAGCIAAGSLVAA). Asparagine 467 is a glycosylation site (N-linked (GlcNAc...) asparagine).

The protein belongs to the glycosyl hydrolase 54 family.

It carries out the reaction Hydrolysis of terminal non-reducing alpha-L-arabinofuranoside residues in alpha-L-arabinosides.. Its pathway is glycan metabolism; L-arabinan degradation. This chain is Alpha-L-arabinofuranosidase (abf1), found in Hypocrea jecorina (Trichoderma reesei).